The chain runs to 202 residues: Na(+)-translocating NADH-quinone reductase subunit E (202 aa).

Helical transmembrane passes span valine 5–methionine 25, valine 35–leucine 55, phenylalanine 81–phenylalanine 101, glycine 114–valine 134, leucine 144–isoleucine 164, and leucine 180–methionine 200.

The protein belongs to the NqrDE/RnfAE family. In terms of assembly, composed of six subunits; NqrA, NqrB, NqrC, NqrD, NqrE and NqrF.

The protein localises to the cell inner membrane. The catalysed reaction is a ubiquinone + n Na(+)(in) + NADH + H(+) = a ubiquinol + n Na(+)(out) + NAD(+). NQR complex catalyzes the reduction of ubiquinone-1 to ubiquinol by two successive reactions, coupled with the transport of Na(+) ions from the cytoplasm to the periplasm. NqrA to NqrE are probably involved in the second step, the conversion of ubisemiquinone to ubiquinol. The sequence is that of Na(+)-translocating NADH-quinone reductase subunit E from Psychrobacter sp. (strain PRwf-1).